The sequence spans 265 residues: Silaffin-1 (265 aa).

An N-terminal signal peptide occupies residues 1-19 (MKLTAIFPLLFTAVGYCAA). A propeptide spans 20-107 (QSIADLAAAN…DSEEEELRIL (88 aa)) (acidic). Residues 37–106 (SAQLISADSS…EDSEEEELRI (70 aa)) form a disordered region. The segment covering 51–90 (DSSVESVDAASSDVSGSSVESVDVSGSSLESVDVSGSSLE) has biased composition (low complexity). Over residues 91-103 (SVDDSSEDSEEEE) the composition is skewed to acidic residues. An R1; atypical repeat occupies 108–140 (SSKKSGSYYSYGTKKSGSYSGYSTKKSASRRIL). The segment at 108–257 (SSKKSGSYYS…GSKGSKRRIL (150 aa)) is 7 X 19 AA repeat of S-S-K-K-S-G-S-Y-S-G-S-K-G-S-K-R-R-[IL]-L. At K110 the chain carries N6-poly(methylaminopropyl)lysine. The residue at position 111 (K111) is an N6,N6-dimethyllysine. Positions 122 to 133 (KSGSYSGYSTKK) are enriched in low complexity. The interval 122 to 265 (KSGSYSGYST…ILSGGLRGSM (144 aa)) is disordered. A propeptide spanning residues 137–140 (RRIL) is cleaved from the precursor. An R2; atypical repeat occupies 141-162 (SSKKSGSYSGYSTKKSGSRRIL). Positions 142 to 155 (SKKSGSYSGYSTKK) are enriched in low complexity. K143 is modified (N6-poly(methylaminopropyl)lysine). An N6,N6-dimethyllysine modification is found at K144. Residue K154 is modified to N6-poly(methylaminopropyl)lysine. K155 bears the N6,N6-dimethyllysine mark. Residues 159–162 (RRIL) constitute a propeptide that is removed on maturation. Residues S163 and S164 each carry the phosphoserine modification. Residues 163–181 (SSKKSGSYSGSKGSKRRIL) form an R3 repeat. The span at 164 to 174 (SKKSGSYSGSK) shows a compositional bias: low complexity. K165 is modified (N6-poly(methylaminopropyl)lysine). K166 carries the post-translational modification N6,N6-dimethyllysine. Phosphoserine is present on residues S167, S169, S171, and S173. K174 is subject to N6,N6,N6-trimethyl-5-hydroxylysine. S176 bears the Phosphoserine mark. Residue K177 is modified to N6-poly(methylaminopropyl)lysine. Positions 178–181 (RRIL) are excised as a propeptide. 2 positions are modified to phosphoserine: S182 and S183. An R4 repeat occupies 182 to 200 (SSKKSGSYSGSKGSKRRNL). The segment covering 183-193 (SKKSGSYSGSK) has biased composition (low complexity). K184 carries the post-translational modification N6-poly(methylaminopropyl)lysine. K185 carries the N6,N6-dimethyllysine modification. 4 positions are modified to phosphoserine: S186, S188, S190, and S192. The residue at position 193 (K193) is an N6,N6,N6-trimethyl-5-hydroxylysine. S195 is subject to Phosphoserine. K196 bears the N6-poly(methylaminopropyl)lysine mark. Positions 197–200 (RRNL) are excised as a propeptide. Residues S201 and S202 each carry the phosphoserine modification. The R5 repeat unit spans residues 201 to 219 (SSKKSGSYSGSKGSKRRIL). Residues 202 to 212 (SKKSGSYSGSK) show a composition bias toward low complexity. N6-poly(methylaminopropyl)lysine is present on K203. At K204 the chain carries N6,N6-dimethyllysine. 4 positions are modified to phosphoserine: S205, S207, S209, and S211. K212 carries the N6,N6,N6-trimethyl-5-hydroxylysine modification. S214 is subject to Phosphoserine. K215 bears the N6-poly(methylaminopropyl)lysine mark. A propeptide spanning residues 216–219 (RRIL) is cleaved from the precursor. Residues S220 and S221 each carry the phosphoserine modification. An R6 repeat occupies 220 to 238 (SSKKSGSYSGSKGSKRRNL). The span at 221–231 (SKKSGSYSGSK) shows a compositional bias: low complexity. Position 222 is an N6-poly(methylaminopropyl)lysine (K222). K223 bears the N6,N6-dimethyllysine mark. Phosphoserine occurs at positions 224, 226, 228, and 230. An N6,N6,N6-trimethyl-5-hydroxylysine modification is found at K231. Position 233 is a phosphoserine (S233). Residue K234 is modified to N6-poly(methylaminopropyl)lysine. The propeptide occupies 235 to 238 (RRNL). Residues S239 and S240 each carry the phosphoserine modification. One copy of the R7 repeat lies at 239-257 (SSKKSGSYSGSKGSKRRIL). A compositionally biased stretch (low complexity) spans 240–250 (SKKSGSYSGSK). N6-poly(methylaminopropyl)lysine is present on K241. K242 is modified (N6,N6-dimethyllysine). A phosphoserine mark is found at S243, S245, S247, and S249. K250 bears the N6,N6,N6-trimethyl-5-hydroxylysine mark. S252 is subject to Phosphoserine. K253 carries the post-translational modification N6-poly(methylaminopropyl)lysine. Positions 254-265 (RRILSGGLRGSM) are excised as a propeptide.

Silaffin-1A peptides form large aggregates via electrostatic interactions due to intermolecular interactions between the negatively charged phosphate groups and the polyamine moieties. Post-translationally, N6-polymethylaminopropylated. Two lysine residues of each peptide bears 6 to 11 repeats of methyl-propylamine, which gives a possible template for nucleation, and may also control the silica colloid size within the silica deposition vesicle (SDV). Phosphorylated. All serine residues of the Silaffin-1A1 peptide are phosphorylated. Only minor amounts of the Silaffin-1A2 peptide are phosphorylated. Phosphorylation is essential for the activity. It may represent a source of anions required for silica formation of diatoms.

Its function is as follows. Catalyzes the polymerization of silica spheres from a silicilic acid solution. It therefore plays a central role in the formation of silica cell wall of diatoms. The chain is Silaffin-1 (SIL1) from Cylindrotheca fusiformis (Marine diatom).